The primary structure comprises 648 residues: Adhesion G-protein coupled receptor G1 (648 aa).

The signal sequence occupies residues 1 to 24; that stretch reads MKQNPAKTARMWIIICLLFVLGQA. Topologically, residues 25–370 are extracellular; it reads TDNDRDFKMC…STVRHLKALT (346 aa). The cysteines at positions 34 and 96 are disulfide-linked. N-linked (GlcNAc...) asparagine glycans are attached at residues asparagine 62, asparagine 91, asparagine 114, asparagine 146, asparagine 222, asparagine 262, and asparagine 286. A disulfide bond links cysteine 127 and cysteine 176. The GAIN-B domain maps to 214 to 361; it reads MDEEFTGHNF…AILVQVEQKS (148 aa). 2 disulfide bridges follow: cysteine 313-cysteine 343 and cysteine 331-cysteine 345. The segment at 313-361 is GPS; sequence CVSWDTKQDNEVNWKDDGCDTVKINEEQTECHCNHLTYFAILVQVEQKS. Residues 349–361 form a stachel region; sequence TYFAILVQVEQKS. A helical transmembrane segment spans residues 371–391; it reads FITAVGCAVSLVSCLVLFYWL. The Cytoplasmic portion of the chain corresponds to 392 to 408; that stretch reads CKRRRGKKNQISLVHRG. Residues 409–429 traverse the membrane as a helical segment; it reads LVVAIFLLCLFFILTGILANV. Residues 430-443 lie on the Extracellular side of the membrane; that stretch reads ANETVCQLTGSLLH. Residue asparagine 431 is glycosylated (N-linked (GlcNAc...) asparagine). The chain crosses the membrane as a helical span at residues 444-464; it reads YGLLSTLCWMAMEVFHTFLLV. Over 465–471 the chain is Cytoplasmic; the sequence is RKVFNSP. The chain crosses the membrane as a helical span at residues 472-492; sequence LPIWIFYLMGFGFPFLLVSIL. Residues 493-530 are Extracellular-facing; the sequence is LSVGDIYGERKIKPSDDVNNPYRMCWMTEGDKSQLAHY. A helical membrane pass occupies residues 531–551; that stretch reads IINIGLLAVVVSSGLVMLFLV. Over 552–563 the chain is Cytoplasmic; the sequence is VREIRNRPDWKK. The helical transmembrane segment at 564-586 threads the bilayer; it reads IHVAFLSIWGLTCLYGTTWALGF. The Extracellular segment spans residues 587-595; that stretch reads LDFGPFSEV. The helical transmembrane segment at 596-618 threads the bilayer; that stretch reads TLFLFCIINSLQGFFLMLRYYAL. At 619 to 648 the chain is on the cytoplasmic side; that stretch reads ERMKKKDVSSSDGSSSGSSKQHMLQTNEKS.

It belongs to the G-protein coupled receptor 2 family. LN-TM7 subfamily. As to quaternary structure, heterodimer of 2 chains generated by proteolytic processing; the large extracellular N-terminal fragment (ADGRG1 NT) and the membrane-bound C-terminal fragment (ADGRG1-CT) predominantly remain associated and non-covalently linked. Autoproteolytically cleaved into 2 fragments; the large extracellular N-terminal fragment (ADGRG1 NT) and the membrane-bound C-terminal fragment (ADGRG1 CT) predominantly remain associated and non-covalently linked.

The protein resides in the cell membrane. Forms a heterodimer of 2 chains generated by proteolytic processing that remain associated through non-covalent interactions mediated by the GAIN-B domain. In the inactivated receptor, the Stachel sequence (also named stalk) is embedded in the GAIN-B domain, where it adopts a beta-strand conformation. On activation, the Stachel moves into the 7 transmembrane region and adopts a twisted hook-shaped configuration that forms contacts within the receptor, leading to coupling of a G-alpha protein, which activates signaling. The cleaved GAIN-B and N-terminal domains can then dissociate from the rest of the receptor. Its function is as follows. Adhesion G-protein coupled receptor (aGPCR), which is involved in oligodendrocyte development and maintenance of peripheral myelin. Ligand binding causes a conformation change that triggers signaling via guanine nucleotide-binding proteins (G proteins) and modulates the activity of downstream effectors, such as RhoA pathway. Adgrg1 is coupled to G(12) and/or G(13) G proteins (gna12 and gna13, respectively) and mediates the activation Rho small GTPases. Adgrg1-dependent RhoA signaling promotes timely radial sorting of axons. Required to establish proper myelin thickness and facilitate organization of the myelin sheath in the mature peripheral nervous system. The polypeptide is Adhesion G-protein coupled receptor G1 (Danio rerio (Zebrafish)).